Consider the following 447-residue polypeptide: Na(+)-translocating NADH-quinone reductase subunit A (447 aa).

The protein belongs to the NqrA family. Composed of six subunits; NqrA, NqrB, NqrC, NqrD, NqrE and NqrF.

It carries out the reaction a ubiquinone + n Na(+)(in) + NADH + H(+) = a ubiquinol + n Na(+)(out) + NAD(+). NQR complex catalyzes the reduction of ubiquinone-1 to ubiquinol by two successive reactions, coupled with the transport of Na(+) ions from the cytoplasm to the periplasm. NqrA to NqrE are probably involved in the second step, the conversion of ubisemiquinone to ubiquinol. This Neisseria meningitidis serogroup C / serotype 2a (strain ATCC 700532 / DSM 15464 / FAM18) protein is Na(+)-translocating NADH-quinone reductase subunit A.